The following is a 564-amino-acid chain: Poly(U)-binding-splicing factor PUF60 (564 aa).

Residues 1–521 form an inhibits homodimerization region; it reads MATATIALQV…EDAEIIVKIF (521 aa). Residues 37–61 are disordered; sequence KWKPPQGTESIKMENGQSTGTKLGL. A Glycyl lysine isopeptide (Lys-Gly) (interchain with G-Cter in SUMO2) cross-link involves residue Lys48. The residue at position 65 (Thr65) is a Phosphothreonine. The interval 82-564 is inhibits transcriptional repression, interaction with ERCC3 and apoptosis induction; the sequence is QSIKSVLVKQ…ERFDNSDLSA (483 aa). Lys85 is covalently cross-linked (Glycyl lysine isopeptide (Lys-Gly) (interchain with G-Cter in SUMO2)). Ser117 carries the phosphoserine modification. 2 consecutive RRM domains span residues 134 to 212 and 231 to 309; these read CRVY…RPSN and NRIY…KAVT. Residue Ser249 is modified to Phosphoserine. Lys256 is modified (N6-acetyllysine). The residue at position 319 (Thr319) is a Phosphothreonine. Residues 421 to 442 are disordered; it reads KKEKEEEELFPESERPEMLSEQ. Lys424 participates in a covalent cross-link: Glycyl lysine isopeptide (Lys-Gly) (interchain with G-Cter in SUMO2). Positions 432–442 are enriched in basic and acidic residues; it reads ESERPEMLSEQ. Lys459 bears the N6-acetyllysine mark. Residue Lys463 forms a Glycyl lysine isopeptide (Lys-Gly) (interchain with G-Cter in SUMO2) linkage. In terms of domain architecture, RRM 3; atypical spans 467–554; the sequence is TVMVLRNMVD…RKVVAEVYDQ (88 aa).

It belongs to the RRM half pint family. In terms of assembly, homodimer. Associates with the spliceosome. Found in a complex with RO60 and Y5 RNA. Found in a complex with FUBP1 and far upstream element (FUSE) DNA segment. Interacts directly with ERCC3. Interacts with CDK7 and GTF2H1. Interacts with SRSF11/P54. Interacts with ARGLU1; interaction may be involved in ARGLU1-mediated modulation of alternative splicing.

It localises to the nucleus. Functionally, DNA- and RNA-binding protein, involved in several nuclear processes such as pre-mRNA splicing, apoptosis and transcription regulation. In association with FUBP1 regulates MYC transcription at the P2 promoter through the core-TFIIH basal transcription factor. Acts as a transcriptional repressor through the core-TFIIH basal transcription factor. Represses FUBP1-induced transcriptional activation but not basal transcription. Decreases ERCC3 helicase activity. Is also involved in pre-mRNA splicing. Promotes splicing of an intron with weak 3'-splice site and pyrimidine tract in a cooperative manner with U2AF2. Involved in apoptosis induction when overexpressed in HeLa cells. Modulates alternative splicing of several mRNAs. Binds to relaxed DNA of active promoter regions. Binds to the pyrimidine tract and 3'-splice site regions of pre-mRNA; binding is enhanced in presence of U2AF2. Binds to Y5 RNA in association with RO60. Binds to poly(U) RNA. The sequence is that of Poly(U)-binding-splicing factor PUF60 from Rattus norvegicus (Rat).